The following is a 479-amino-acid chain: Probable acyl-CoA desaturase (479 aa).

The span at 1 to 18 (MTAPSATAFSSATTQPTT) shows a compositional bias: low complexity. The segment at 1-28 (MTAPSATAFSSATTQPTTEGNASMRKRT) is disordered. Residues 1–61 (MTAPSATAFS…PWTMQNWWRH (61 aa)) are Cytoplasmic-facing. A helical membrane pass occupies residues 62–82 (LNWLHCMLIFGLPMIAIYGVF). Over 83–89 (TTPLQTK) the chain is Lumenal. A helical membrane pass occupies residues 90–110 (TLIFAIIYYAYSGLGITAGYH). Residues His-110, His-115, His-147, His-150, and His-151 each coordinate Fe cation. A Histidine box-1 motif is present at residues 110-115 (HRLWSH). Over 111–204 (RLWSHRAYKA…DPFVMFNHRH (94 aa)) the chain is Cytoplasmic. A Histidine box-2 motif is present at residues 147-151 (HRAHH). The helical transmembrane segment at 205-225 (FLPIASFMAFIFPSLFCGLLW) threads the bilayer. The Lumenal portion of the chain corresponds to 226–229 (GDYR). The helical transmembrane segment at 230-250 (GGYFYAGVCRLVFVHHATFCV) threads the bilayer. The Cytoplasmic portion of the chain corresponds to 251-479 (NSLAHLIGSQ…QPPIEAAAAN (229 aa)). Fe cation contacts are provided by His-255, His-284, His-287, and His-288. Residues 284–288 (HNYHH) carry the Histidine box-3 motif. A Cytochrome b5 heme-binding domain is found at 357-433 (QLPVMEFEDF…LSTYRVAVVR (77 aa)). 2 residues coordinate heme: His-390 and His-416.

It belongs to the fatty acid desaturase type 1 family. Fe(2+) is required as a cofactor.

It localises to the membrane. The enzyme catalyses octadecanoyl-CoA + 2 Fe(II)-[cytochrome b5] + O2 + 2 H(+) = (9Z)-octadecenoyl-CoA + 2 Fe(III)-[cytochrome b5] + 2 H2O. Stearoyl-CoA desaturase that utilizes O(2) and electrons from reduced cytochrome b5 to introduce the first double bond into saturated fatty acyl-CoA substrates. Catalyzes the insertion of a cis double bond at the delta-9 position into fatty acyl-CoA substrates including palmitoyl-CoA and stearoyl-CoA. Contributes to the biosynthesis of membrane phospholipids, cholesterol esters and triglycerides. This Schizosaccharomyces pombe (strain 972 / ATCC 24843) (Fission yeast) protein is Probable acyl-CoA desaturase.